A 594-amino-acid polypeptide reads, in one-letter code: UvrABC system protein C (594 aa).

A GIY-YIG domain is found at 13 to 99 (HSSGVYQYFD…IKQLKPKYNI (87 aa)). The UVR domain maps to 205–240 (DKLIKELELKMERLSNNLRFEEALIYRDRIAKIQKI).

The protein belongs to the UvrC family. In terms of assembly, interacts with UvrB in an incision complex.

It is found in the cytoplasm. Its function is as follows. The UvrABC repair system catalyzes the recognition and processing of DNA lesions. UvrC both incises the 5' and 3' sides of the lesion. The N-terminal half is responsible for the 3' incision and the C-terminal half is responsible for the 5' incision. The polypeptide is UvrABC system protein C (Helicobacter pylori (strain Shi470)).